The following is a 54-amino-acid chain: uncharacterized protein (54 aa).

The first 21 residues, 1–21, serve as a signal peptide directing secretion; that stretch reads MNSKQILSLSAFAMTIATAAA. Residues 22-29 are Extracellular-facing; the sequence is GNWNAGDT. A helical transmembrane segment spans residues 30-50; that stretch reads IALLIGIAMFFVLLLALLGWI. The Cytoplasmic portion of the chain corresponds to 51 to 54; sequence SRKK.

Its subcellular location is the membrane. This is an uncharacterized protein from Dictyostelium discoideum (Social amoeba).